Here is a 586-residue protein sequence, read N- to C-terminus: Dolichyl-diphosphooligosaccharide--protein glycosyltransferase subunit 1 (586 aa).

Residues 1–15 form the signal peptide; the sequence is MRLLFAIALLGAVFA. The Lumenal segment spans residues 16-421; it reads EDAWKAANVD…EFEFVDMLRE (406 aa). A helical transmembrane segment spans residues 422 to 442; the sequence is PLLASAFFFSLFFVIIVYSRF. The Cytoplasmic portion of the chain corresponds to 443–586; sequence DFTISSDPAK…NRADSVLASI (144 aa).

This sequence belongs to the OST1 family. Component of the oligosaccharyltransferase (OST) complex.

Its subcellular location is the endoplasmic reticulum membrane. It localises to the cytoplasmic granule. It participates in protein modification; protein glycosylation. Its function is as follows. Subunit of the oligosaccharyl transferase (OST) complex that catalyzes the initial transfer of a defined glycan (Glc(3)Man(9)GlcNAc(2) in eukaryotes) from the lipid carrier dolichol-pyrophosphate to an asparagine residue within an Asn-X-Ser/Thr consensus motif in nascent polypeptide chains, the first step in protein N-glycosylation. N-glycosylation occurs cotranslationally and the complex associates with the Sec61 complex at the channel-forming translocon complex that mediates protein translocation across the endoplasmic reticulum (ER). All subunits are required for a maximal enzyme activity. The sequence is that of Dolichyl-diphosphooligosaccharide--protein glycosyltransferase subunit 1 from Caenorhabditis elegans.